The chain runs to 559 residues: Oxygen-dependent choline dehydrogenase (559 aa).

Residue 4–33 (DYIIIGAGSAGNVLATRLTEESDVSVLLLE) coordinates FAD. The segment at 182–201 (EGFGPMDRTVTPKGRRASTA) is disordered. Catalysis depends on His471, which acts as the Proton acceptor.

It belongs to the GMC oxidoreductase family. FAD is required as a cofactor.

It carries out the reaction choline + A = betaine aldehyde + AH2. The enzyme catalyses betaine aldehyde + NAD(+) + H2O = glycine betaine + NADH + 2 H(+). It participates in amine and polyamine biosynthesis; betaine biosynthesis via choline pathway; betaine aldehyde from choline (cytochrome c reductase route): step 1/1. Its function is as follows. Involved in the biosynthesis of the osmoprotectant glycine betaine. Catalyzes the oxidation of choline to betaine aldehyde and betaine aldehyde to glycine betaine at the same rate. This chain is Oxygen-dependent choline dehydrogenase, found in Pectobacterium carotovorum subsp. carotovorum (strain PC1).